The following is a 732-amino-acid chain: Small conductance calcium-activated potassium channel protein 3 (732 aa).

Over residues 1–11 the composition is skewed to basic and acidic residues; the sequence is MDTSGHFHDSG. Disordered stretches follow at residues 1 to 82 and 103 to 162; these read MDTS…QQAP and HSSP…ASPL. The segment covering 35–59 has biased composition (pro residues); that stretch reads QPPPPSAPPAVPQQPPGPLLQPQPP. Over residues 60–82 the composition is skewed to low complexity; that stretch reads QLQQQQQQQQQQQQQQQQQQQAP. The segment covering 113–133 has biased composition (polar residues); that stretch reads NSANSTAILHPSSRQGSQLNL. Residues 139-148 are compositionally biased toward low complexity; sequence GHSPSSTATS. Residue Ser168 is modified to Phosphoserine. Over residues 241 to 257 the composition is skewed to polar residues; it reads THNHQHAGTTAGSTTFP. Residues 241-260 form a disordered region; the sequence is THNHQHAGTTAGSTTFPKAN. Residues 289 to 309 form a helical membrane-spanning segment; it reads LIFGMFGIVVMVIETELSWGL. The helical transmembrane segment at 316–336 threads the bilayer; the sequence is FSLALKCLISLSTIILLGLII. Residues 367 to 387 form a helical membrane-spanning segment; it reads ISLEMLVCAIHPIPGEYKFFW. Residues 406 to 426 traverse the membrane as a helical segment; it reads IILSIPMFLRLYLIARVMLLH. A helical membrane pass occupies residues 455–475; that stretch reads LMTICPGTVLLVFSISLWIIA. Positions 495–515 form an intramembrane region, pore-forming; that stretch reads FLGAMWLISITFLSIGYGDMV. The chain crosses the membrane as a helical span at residues 524 to 544; that stretch reads VCLLTGIMGAGCTALVVAVVA. Residues 562 to 638 form a calmodulin-binding region; sequence DTQLTKRIKN…LVDLSKMQNV (77 aa). Residues 643–670 adopt a coiled-coil conformation; sequence ITELNDRSEDLEKQIGSLESKLEHLTAS. Residues 704–732 form a disordered region; the sequence is GTSHAPPSDSPIGISSTSFPTPYTSSSSC. Residues 718 to 732 show a composition bias toward low complexity; that stretch reads SSTSFPTPYTSSSSC.

Belongs to the potassium channel KCNN family. KCa2.3/KCNN3 subfamily. In terms of assembly, homodimer. Heteromultimer with KCNN2 or KCNN1; this modulates plasma membrane expression and consequently the small conductance calcium-activated potassium channel activity. The complex is composed of 4 channel subunits each of which binds to a calmodulin subunit which regulates the channel activity through calcium-binding. Interacts with CALM1.

It is found in the cell membrane. Its subcellular location is the cytoplasm. The protein resides in the myofibril. The protein localises to the sarcomere. It localises to the z line. It catalyses the reaction K(+)(in) = K(+)(out). Inhibited by bee venom neurotoxin apamin. In terms of biological role, small conductance calcium-activated potassium channel that mediates the voltage-independent transmembrane transfer of potassium across the cell membrane through a constitutive interaction with calmodulin which binds the intracellular calcium allowing its opening. The current is characterized by a voltage-independent activation, an intracellular calcium concentration increase-dependent activation and a single-channel conductance of 10 picosiemens. Also presents an inwardly rectifying current, thus reducing its already small outward conductance of potassium ions, which is particularly the case when the membrane potential displays positive values, above + 20 mV. Activation is followed by membrane hyperpolarization. Thought to regulate neuronal excitability by contributing to the slow component of synaptic afterhyperpolarization. This is Small conductance calcium-activated potassium channel protein 3 from Rattus norvegicus (Rat).